The primary structure comprises 321 residues: o-succinylbenzoate synthase (321 aa).

Residue Lys-134 is the Proton donor of the active site. Mg(2+)-binding residues include Asp-162, Glu-191, and Asp-214. Lys-236 (proton acceptor) is an active-site residue.

The protein belongs to the mandelate racemase/muconate lactonizing enzyme family. MenC type 1 subfamily. Requires a divalent metal cation as cofactor.

It catalyses the reaction (1R,6R)-6-hydroxy-2-succinyl-cyclohexa-2,4-diene-1-carboxylate = 2-succinylbenzoate + H2O. The protein operates within quinol/quinone metabolism; 1,4-dihydroxy-2-naphthoate biosynthesis; 1,4-dihydroxy-2-naphthoate from chorismate: step 4/7. It participates in quinol/quinone metabolism; menaquinone biosynthesis. Functionally, converts 2-succinyl-6-hydroxy-2,4-cyclohexadiene-1-carboxylate (SHCHC) to 2-succinylbenzoate (OSB). The polypeptide is o-succinylbenzoate synthase (Klebsiella pneumoniae (strain 342)).